An 878-amino-acid polypeptide reads, in one-letter code: Leucine--tRNA ligase (878 aa).

Positions 56–66 (PYPSGKLHMGH) match the 'HIGH' region motif. Residues 630 to 634 (KMSKS) carry the 'KMSKS' region motif. K633 serves as a coordination point for ATP.

It belongs to the class-I aminoacyl-tRNA synthetase family.

It is found in the cytoplasm. It catalyses the reaction tRNA(Leu) + L-leucine + ATP = L-leucyl-tRNA(Leu) + AMP + diphosphate. The polypeptide is Leucine--tRNA ligase (Prochlorococcus marinus (strain MIT 9313)).